Consider the following 313-residue polypeptide: Biotin synthase (313 aa).

One can recognise a Radical SAM core domain in the interval tyrosine 37–alanine 263. Cysteine 55, cysteine 59, and cysteine 62 together coordinate [4Fe-4S] cluster. [2Fe-2S] cluster contacts are provided by cysteine 98, cysteine 131, cysteine 191, and arginine 261.

This sequence belongs to the radical SAM superfamily. Biotin synthase family. As to quaternary structure, homodimer. Requires [4Fe-4S] cluster as cofactor. [2Fe-2S] cluster is required as a cofactor.

The catalysed reaction is (4R,5S)-dethiobiotin + (sulfur carrier)-SH + 2 reduced [2Fe-2S]-[ferredoxin] + 2 S-adenosyl-L-methionine = (sulfur carrier)-H + biotin + 2 5'-deoxyadenosine + 2 L-methionine + 2 oxidized [2Fe-2S]-[ferredoxin]. The protein operates within cofactor biosynthesis; biotin biosynthesis; biotin from 7,8-diaminononanoate: step 2/2. Its function is as follows. Catalyzes the conversion of dethiobiotin (DTB) to biotin by the insertion of a sulfur atom into dethiobiotin via a radical-based mechanism. This Staphylococcus epidermidis (strain ATCC 12228 / FDA PCI 1200) protein is Biotin synthase.